The sequence spans 743 residues: 1,4-alpha-glucan branching enzyme GlgB 2 (743 aa).

Residues 1–23 are disordered; it reads MSERQGGQEQRTEADGMTTEGIS. The active-site Nucleophile is Asp-422. Glu-475 acts as the Proton donor in catalysis.

The protein belongs to the glycosyl hydrolase 13 family. GlgB subfamily. As to quaternary structure, monomer.

The enzyme catalyses Transfers a segment of a (1-&gt;4)-alpha-D-glucan chain to a primary hydroxy group in a similar glucan chain.. It functions in the pathway glycan biosynthesis; glycogen biosynthesis. Its function is as follows. Catalyzes the formation of the alpha-1,6-glucosidic linkages in glycogen by scission of a 1,4-alpha-linked oligosaccharide from growing alpha-1,4-glucan chains and the subsequent attachment of the oligosaccharide to the alpha-1,6 position. In Xanthomonas euvesicatoria pv. vesicatoria (strain 85-10) (Xanthomonas campestris pv. vesicatoria), this protein is 1,4-alpha-glucan branching enzyme GlgB 2.